Here is a 237-residue protein sequence, read N- to C-terminus: Ribonuclease PH (237 aa).

Residues R86 and 124-126 each bind phosphate; that span reads GTR.

It belongs to the RNase PH family. As to quaternary structure, homohexameric ring arranged as a trimer of dimers.

The catalysed reaction is tRNA(n+1) + phosphate = tRNA(n) + a ribonucleoside 5'-diphosphate. Functionally, phosphorolytic 3'-5' exoribonuclease that plays an important role in tRNA 3'-end maturation. Removes nucleotide residues following the 3'-CCA terminus of tRNAs; can also add nucleotides to the ends of RNA molecules by using nucleoside diphosphates as substrates, but this may not be physiologically important. Probably plays a role in initiation of 16S rRNA degradation (leading to ribosome degradation) during starvation. In Methylorubrum extorquens (strain CM4 / NCIMB 13688) (Methylobacterium extorquens), this protein is Ribonuclease PH.